We begin with the raw amino-acid sequence, 143 residues long: Large ribosomal subunit protein uL16c (143 aa).

The protein belongs to the universal ribosomal protein uL16 family. In terms of assembly, part of the 50S ribosomal subunit.

It is found in the plastid. The protein resides in the chloroplast. This chain is Large ribosomal subunit protein uL16c, found in Spirogyra maxima (Green alga).